The following is a 204-amino-acid chain: Protein FAM167A (204 aa).

The interval 58–80 (GLAVSDGSTELEKDAGLKPRATP) is disordered. Positions 113–146 (LRKELMEMRIQDQQLARQLMRLRGDINKLKVEQT) form a coiled coil.

The protein belongs to the FAM167 (SEC) family.

This Danio rerio (Zebrafish) protein is Protein FAM167A (fam167a).